The primary structure comprises 355 residues: UDP-3-O-acylglucosamine N-acyltransferase (355 aa).

Catalysis depends on His-258, which acts as the Proton acceptor.

It belongs to the transferase hexapeptide repeat family. LpxD subfamily. In terms of assembly, homotrimer.

It catalyses the reaction a UDP-3-O-[(3R)-3-hydroxyacyl]-alpha-D-glucosamine + a (3R)-hydroxyacyl-[ACP] = a UDP-2-N,3-O-bis[(3R)-3-hydroxyacyl]-alpha-D-glucosamine + holo-[ACP] + H(+). Its pathway is bacterial outer membrane biogenesis; LPS lipid A biosynthesis. Its function is as follows. Catalyzes the N-acylation of UDP-3-O-acylglucosamine using 3-hydroxyacyl-ACP as the acyl donor. Is involved in the biosynthesis of lipid A, a phosphorylated glycolipid that anchors the lipopolysaccharide to the outer membrane of the cell. This Bradyrhizobium diazoefficiens (strain JCM 10833 / BCRC 13528 / IAM 13628 / NBRC 14792 / USDA 110) protein is UDP-3-O-acylglucosamine N-acyltransferase.